The following is a 420-amino-acid chain: MSGRPRTTSFAESCKPVQQPSAFGSMKVSRDKDGSKVTTVVATPGQGPDRPQEVSYTDTKVIGNGSFGVVYQAKLCDSGELVAIKKVLQDKRFKNRELQIMRKLDHCNIVRLRYFFYSSGEKKDEVYLNLVLDYVPETVYRVARHYSRAKQTLPVIYVKLYMYQLFRSLAYIHSFGICHRDIKPQNLLLDPDTAVLKLCDFGSAKQLVRGEPNVSYICSRYYRAPELIFGATDYTSSIDVWSAGCVLAELLLGQPIFPGDSGVDQLVEIIKVLGTPTREQIREMNPNYTEFKFPQIKAHPWTKVFRPRTPPEAIALCSRLLEYTPTARLTPLEACAHSFFDELRDPNVKLPNGRDTPALFNFTTQELSSNPPLATILIPPHARIQAAASPPANATAASDTNAGDRGQTNNAASASASNST.

Positions 1–22 (MSGRPRTTSFAESCKPVQQPSA) are enriched in polar residues. Residues 1–53 (MSGRPRTTSFAESCKPVQQPSAFGSMKVSRDKDGSKVTTVVATPGQGPDRPQE) form a disordered region. Residue S9 is modified to Phosphoserine; by PKB/AKT1, RPS6KA3 and SGK3. Residue C14 is the site of S-palmitoyl cysteine attachment. Residues 56 to 340 (YTDTKVIGNG…PLEACAHSFF (285 aa)) form the Protein kinase domain. Residues 62-70 (IGNGSFGVV) and K85 each bind ATP. D181 functions as the Proton acceptor in the catalytic mechanism. Residue Y216 is modified to Phosphotyrosine. Positions 385–420 (QAAASPPANATAASDTNAGDRGQTNNAASASASNST) are disordered. 2 stretches are compositionally biased toward low complexity: residues 386–401 (AAAS…SDTN) and 409–420 (NNAASASASNST). S389 is modified (phosphoserine).

This sequence belongs to the protein kinase superfamily. CMGC Ser/Thr protein kinase family. GSK-3 subfamily. In terms of assembly, monomer. Interacts with DAB2IP (via C2 domain); the interaction stimulates GSK3B kinase activation. Interacts (via C2 domain) with PPP2CA. Interacts with CABYR, MMP2, MUC1, NIN and PRUNE1. Interacts with AXIN1; the interaction mediates hyperphosphorylation of CTNNB1 leading to its ubiquitination and destruction. Interacts with and phosphorylates SNAI1. Interacts with DNM1L (via a C-terminal domain). Interacts with ARRB2. Interacts with DISC1. Found in a complex composed of MACF1, APC, AXIN1, CTNNB1 and GSK3B. Interacts with SGK3. Interacts with the CLOCK-BMAL1 heterodimer. Interacts with ZBED3. Interacts with the BMAL1. The complex composed, at least, of APC, CTNNB1 and GSK3B interacts with JPT1; the interaction requires the inactive form of GSK3B (phosphorylated at 'Ser-9'). Forms a complex composed of PRKAR2A or PRKAR2B, GSK3B and GSKIP through GSKIP interaction; facilitates PKA-induced phosphorylation and regulates GSK3B activity. Interacts with GSKIP. Interacts with GID8. Interacts with PIWIL2. Interacts with LMBR1L. Interacts with DDX3X. Interacts with BIRC2. Interacts with TNFRSF10B; TNFRSF10B stimulation inhibits GSK3B kinase activity. Found in a complex with SLC39A6, SLC39A10 and with GSK3B that controls NCAM1 phosphorylation. Interacts with PKP3 (via ARM repeats); the interaction may be involved in PKP3 protein degradation. Post-translationally, phosphorylated by AKT1 and ILK1. Upon insulin-mediated signaling, the activated PKB/AKT1 protein kinase phosphorylates and deactivates GSK3B, resulting in the dephosphorylation and activation of GYS1. Activated by phosphorylation at Tyr-216. Phosphorylation of Ser-9 in the hippocampus peaks at CT0, whereas in the liver it peaks at CT12. Inactivated by phosphorylation at Ser-9. Phosphorylated in a circadian manner in the hippocampus. Mono-ADP-ribosylation by PARP10 negatively regulates kinase activity. In terms of processing, palmitoylated. Palmitoylation by ZDHHC4 prevents AKT1-mediated phosphorylation. In terms of tissue distribution, expressed in the liver (at protein level).

The protein resides in the cytoplasm. Its subcellular location is the nucleus. It localises to the cell membrane. It catalyses the reaction L-seryl-[tau protein] + ATP = O-phospho-L-seryl-[tau protein] + ADP + H(+). The catalysed reaction is L-threonyl-[tau protein] + ATP = O-phospho-L-threonyl-[tau protein] + ADP + H(+). It carries out the reaction L-seryl-[protein] + ATP = O-phospho-L-seryl-[protein] + ADP + H(+). The enzyme catalyses L-threonyl-[protein] + ATP = O-phospho-L-threonyl-[protein] + ADP + H(+). Its activity is regulated as follows. Activated by phosphorylation at Tyr-216. In response to insulin, inhibited by phosphorylation at Ser-9 by PKB/AKT1 and RPS6KA3; phosphorylation at this site causes a conformational change, preventing access of substrates to the active site. Inhibited by IL22 treatment which also triggers phosphorylation at Ser-9, promoting inactivation. Inhibited by lithium. Constitutively active protein kinase that acts as a negative regulator in the hormonal control of glucose homeostasis, Wnt signaling and regulation of transcription factors and microtubules, by phosphorylating and inactivating glycogen synthase (GYS1 or GYS2), EIF2B, CTNNB1/beta-catenin, APC, AXIN1, DPYSL2/CRMP2, JUN, NFATC1/NFATC, MAPT/TAU and MACF1. Requires primed phosphorylation of the majority of its substrates. In skeletal muscle, contributes to insulin regulation of glycogen synthesis by phosphorylating and inhibiting GYS1 activity and hence glycogen synthesis. May also mediate the development of insulin resistance by regulating activation of transcription factors. Regulates protein synthesis by controlling the activity of initiation factor 2B (EIF2BE/EIF2B5) in the same manner as glycogen synthase. In Wnt signaling, GSK3B forms a multimeric complex with APC, AXIN1 and CTNNB1/beta-catenin and phosphorylates the N-terminus of CTNNB1 leading to its degradation mediated by ubiquitin/proteasomes. Phosphorylates JUN at sites proximal to its DNA-binding domain, thereby reducing its affinity for DNA. Phosphorylates NFATC1/NFATC on conserved serine residues promoting NFATC1/NFATC nuclear export, shutting off NFATC1/NFATC gene regulation, and thereby opposing the action of calcineurin. Phosphorylates MAPT/TAU on 'Thr-548', decreasing significantly MAPT/TAU ability to bind and stabilize microtubules. MAPT/TAU is the principal component of neurofibrillary tangles in Alzheimer disease. Plays an important role in ERBB2-dependent stabilization of microtubules at the cell cortex. Phosphorylates MACF1, inhibiting its binding to microtubules which is critical for its role in bulge stem cell migration and skin wound repair. Probably regulates NF-kappa-B (NFKB1) at the transcriptional level and is required for the NF-kappa-B-mediated anti-apoptotic response to TNF-alpha (TNF/TNFA). Negatively regulates replication in pancreatic beta-cells, resulting in apoptosis, loss of beta-cells and diabetes. Through phosphorylation of the anti-apoptotic protein MCL1, may control cell apoptosis in response to growth factors deprivation. Phosphorylates MUC1 in breast cancer cells, decreasing the interaction of MUC1 with CTNNB1/beta-catenin. Is necessary for the establishment of neuronal polarity and axon outgrowth. Phosphorylates MARK2, leading to inhibition of its activity. Phosphorylates SIK1 at 'Thr-182', leading to sustainment of its activity. Phosphorylates ZC3HAV1 which enhances its antiviral activity. Phosphorylates SNAI1, leading to its ubiquitination and proteasomal degradation. Phosphorylates SFPQ at 'Thr-687' upon T-cell activation. Phosphorylates NR1D1 st 'Ser-55' and 'Ser-59' and stabilizes it by protecting it from proteasomal degradation. Regulates the circadian clock via phosphorylation of the major clock components including BMAL1, CLOCK and PER2. Phosphorylates CLOCK AT 'Ser-427' and targets it for proteasomal degradation. Phosphorylates BMAL1 at 'Ser-17' and 'Ser-21' and primes it for ubiquitination and proteasomal degradation. Phosphorylates FBXL2 at 'Thr-404' and primes it for ubiquitination by the SCF(FBXO3) complex and proteasomal degradation. Phosphorylates OGT at 'Ser-3' or 'Ser-4' which positively regulates its activity. Phosphorylates MYCN in neuroblastoma cells which may promote its degradation. Regulates the circadian rhythmicity of hippocampal long-term potentiation and BMAL1 and PER2 expression. Acts as a regulator of autophagy by mediating phosphorylation of KAT5/TIP60 under starvation conditions, activating KAT5/TIP60 acetyltransferase activity and promoting acetylation of key autophagy regulators, such as ULK1 and RUBCNL/Pacer. Negatively regulates extrinsic apoptotic signaling pathway via death domain receptors. Promotes the formation of an anti-apoptotic complex, made of DDX3X, BRIC2 and GSK3B, at death receptors, including TNFRSF10B. The anti-apoptotic function is most effective with weak apoptotic signals and can be overcome by stronger stimulation. Phosphorylates E2F1, promoting the interaction between E2F1 and USP11, stabilizing E2F1 and promoting its activity. Phosphorylates mTORC2 complex component RICTOR at 'Ser-1235' in response to endoplasmic stress, inhibiting mTORC2. Phosphorylates FXR1, promoting FXR1 ubiquitination by the SCF(FBXO4) complex and FXR1 degradation by the proteasome. Phosphorylates interleukin-22 receptor subunit IL22RA1, preventing its proteasomal degradation. The protein is Glycogen synthase kinase-3 beta of Mus musculus (Mouse).